A 165-amino-acid polypeptide reads, in one-letter code: UPF0303 protein Bamb_1459 (165 aa).

The protein belongs to the UPF0303 family.

The polypeptide is UPF0303 protein Bamb_1459 (Burkholderia ambifaria (strain ATCC BAA-244 / DSM 16087 / CCUG 44356 / LMG 19182 / AMMD) (Burkholderia cepacia (strain AMMD))).